We begin with the raw amino-acid sequence, 124 residues long: Calvin cycle protein CP12-1, chloroplastic (124 aa).

The N-terminal 47 residues, 1-47 (MTTIAAAGLNVATPRVVVRPVARVLGPVRLNYPWKFGSMKRMVVVKA), are a transit peptide targeting the chloroplast. 2 disulfide bridges follow: C68-C77 and C110-C119. The interval 90 to 124 (AASHARDKKKAGGSDPLEEYCNDNPETDECRTYDN) is disordered. Residues 105-116 (PLEEYCNDNPET) are compositionally biased toward acidic residues.

It belongs to the CP12 family. As to quaternary structure, monomer. Component of a complex that contains two dimers of PRK, two tetramers of GAPDH and CP12. CP12 associates with GAPDH, causing its conformation to change. This GAPDH/CP12 complex binds PRK to form a half-complex (one unit). This unit probably dimerizes due partially to interactions between the enzymes of each unit. In terms of processing, contains two disulfide bonds; only the oxidized protein, with two disulfide bonds, is active in complex formation. The C-terminal disulfide is involved in the interaction with GAPDH and the N-terminal disulfide mediates the binding of PRK with this binary complex. As to expression, mostly expressed in flowers, hypocotyl, cotyledons, leaves, stems, and flower stalks. Barely detectable in roots and siliques. Present in root tips and lateral roots. Accumulates in the cotyledons of etiolated seedlings.

It is found in the plastid. Its subcellular location is the chloroplast. Acts as a linker essential in the assembly of a core complex of PRK/GAPDH. Coordinates the reversible inactivation of chloroplast enzymes GAPDH and PRK during darkness in photosynthetic tissues. The chain is Calvin cycle protein CP12-1, chloroplastic (CP12-1) from Arabidopsis thaliana (Mouse-ear cress).